The sequence spans 662 residues: Cytochrome bo(3) ubiquinol oxidase subunit 1 (662 aa).

Over 1-14 the chain is Extracellular; sequence MFGKLTFDAIPYHE. The helical transmembrane segment at 15-35 threads the bilayer; sequence PIIMITYIAIILIALCIASTI. The Cytoplasmic portion of the chain corresponds to 36-58; the sequence is TYYKKWKYLWYEWFTTVDHKKIS. Residues 59 to 79 traverse the membrane as a helical segment; the sequence is IMYGILAFVMLFRGFVDAILM. The a ubiquinone site is built by R71, D75, and H98. The Extracellular segment spans residues 80–106; sequence RTQQVVASAGFKGFLPPHHYDQIFTAH. H106 lines the heme b pocket. A helical transmembrane segment spans residues 107 to 127; sequence GVIMIFFVAMPLVIGLMNLVI. Residues 128–145 are Cytoplasmic-facing; that stretch reads PLQIGARDVAFPFLNNLS. The helical transmembrane segment at 146–166 threads the bilayer; that stretch reads FWLNVSSAVLLTLSLGIGEFA. Over 167-189 the chain is Extracellular; that stretch reads QTGWLAYPPLSGIKYSSGVGVDY. Position 170 (W170) interacts with heme b. Residues 190–210 traverse the membrane as a helical segment; that stretch reads WIWSLQISGVGTTLTGINFLV. Residues 211-232 lie on the Cytoplasmic side of the membrane; the sequence is TILKMRAPGMSFFKMPVFTWTS. The helical transmembrane segment at 233-253 threads the bilayer; the sequence is LCTNILIVISFPVLTVTLVLL. Over 254-277 the chain is Extracellular; it reads TLDRYFNFHFFTNDLGGNAMMYVN. The helical transmembrane segment at 278–298 threads the bilayer; the sequence is LIWIWGHPEVYILVLPVFGVF. H284 is a Cu(2+) binding site. The segment at residues 284–288 is a cross-link (1'-histidyl-3'-tyrosine (His-Tyr)); it reads HPEVY. Y288 lines the Fe(II)-heme o pocket. At 299–309 the chain is on the cytoplasmic side; it reads SEVVATFSKKR. The helical transmembrane segment at 310–330 threads the bilayer; the sequence is LFGYVSLVWATLSITILSFIV. Residues 331-346 lie on the Extracellular side of the membrane; that stretch reads WLHHFFTMGAGADVNT. Positions 333 and 334 each coordinate Cu(2+). Residues 347–367 traverse the membrane as a helical segment; sequence FFGITTMIIAIPTGVKIFNWL. Over 368 to 380 the chain is Cytoplasmic; it reads FTIYQGRVHMHSS. Residues 381-401 form a helical membrane-spanning segment; that stretch reads ILWTLGFLVTFSIGGMTGVLL. Residues 402-413 lie on the Extracellular side of the membrane; sequence SVPPADFVLHNS. 2 residues coordinate Fe(II)-heme o: H411 and H419. The chain crosses the membrane as a helical span at residues 414–434; the sequence is LFLVAHFHNVIIGGVVFGCFA. H421 is a heme b binding site. Residues 435–456 are Cytoplasmic-facing; it reads GINYWFPKLFGFVLNEIWGKRA. The chain crosses the membrane as a helical span at residues 457 to 477; it reads FWFWIIGFFLAFIPLYFLGLM. Topologically, residues 478-493 are extracellular; the sequence is GMTRRLSQNIDSEFHM. Heme b is bound by residues R481 and R482. Residues 494–514 form a helical membrane-spanning segment; it reads LLCIAAIGACFIGIGIICQVI. Over 515–586 the chain is Cytoplasmic; the sequence is QFFISIKERR…INSINYHDIH (72 aa). The helical transmembrane segment at 587 to 607 threads the bilayer; sequence MPKNTGLGFMISIFSLFFGFS. Position 608 (A608) is a topological domain, extracellular. Residues 609–629 form a helical membrane-spanning segment; sequence VWHITWLCILSFLAIIISLFI. The Cytoplasmic portion of the chain corresponds to 630 to 662; that stretch reads NSLNEDTEYTISAEEIKKIEHQYWKNIQKAGLK.

This sequence belongs to the heme-copper respiratory oxidase family. The cytochrome bo(3) ubiquinol oxidase complex is a heterooctamer of two A chains, two B chains, two C chains and two D chains. Cu(2+) is required as a cofactor. Requires heme b as cofactor. It depends on Fe(II)-heme o as a cofactor.

The protein localises to the cell membrane. It carries out the reaction 2 a ubiquinol + O2 + n H(+)(in) = 2 a ubiquinone + 2 H2O + n H(+)(out). Functionally, cytochrome bo(3) ubiquinol oxidase is the terminal enzyme in the aerobic respiratory chain. Catalyzes the four-electron reduction of O2 to water, using a ubiquinol as a membrane soluble electron donor for molecular oxygen reduction. Has proton pump activity across the membrane in addition to electron transfer, pumping 2 protons/electron and generating a proton motive force. All the redox centers of this enzyme complex are located within the largest subunit, subunit I. Protons are probably pumped via D- and K- channels found in this subunit. The polypeptide is Cytochrome bo(3) ubiquinol oxidase subunit 1 (cyoB) (Buchnera aphidicola subsp. Acyrthosiphon pisum (strain APS) (Acyrthosiphon pisum symbiotic bacterium)).